The primary structure comprises 388 residues: Putative F-box/kelch-repeat protein At2g29820 (388 aa).

Residues 6-33 (EILDGPNGDDPNNNPQEGEDNQNENPQE) form a disordered region. The span at 9 to 21 (DGPNGDDPNNNPQ) shows a compositional bias: low complexity. The segment covering 22 to 33 (EGEDNQNENPQE) has biased composition (acidic residues). Positions 38 to 84 (LRNLLELPEELIERLIAHIPRCYYPYISLVSRDFRQVITSDKLFRTR) constitute an F-box domain. 2 Kelch repeats span residues 140–187 (KMYV…EIGG) and 189–233 (IYVI…FSTY).

The sequence is that of Putative F-box/kelch-repeat protein At2g29820 from Arabidopsis thaliana (Mouse-ear cress).